A 348-amino-acid chain; its full sequence is Glucan endo-1,3-beta-glucosidase, basic isoform (348 aa).

Glutamine 1 carries the post-translational modification Pyrrolidone carboxylic acid. Glutamate 95 serves as the catalytic Proton donor. Glutamate 240 (nucleophile) is an active-site residue. Residues 317 to 348 constitute a propeptide, removed in mature form; sequence AQRMQRLLLMSSMQHIPLRVTCKLEPSSQSLL.

This sequence belongs to the glycosyl hydrolase 17 family.

It localises to the vacuole. The catalysed reaction is Hydrolysis of (1-&gt;3)-beta-D-glucosidic linkages in (1-&gt;3)-beta-D-glucans.. In terms of biological role, implicated in the defense of plants against pathogens. This Phaseolus vulgaris (Kidney bean) protein is Glucan endo-1,3-beta-glucosidase, basic isoform.